The sequence spans 167 residues: Dual specificity protein phosphatase 1B (167 aa).

A Tyrosine-protein phosphatase domain is found at 24-165 (DLSEIQQGLF…LQQFEKSIQG (142 aa)). Cys109 functions as the Phosphocysteine intermediate in the catalytic mechanism.

It belongs to the protein-tyrosine phosphatase family. Non-receptor class dual specificity subfamily. As to quaternary structure, associates with MPK3 and MPK6. Interacts with MPK6 is promoted during HR-like responses triggered by fungal elicitors, whereas interaction with MPK3 in repressed. Expressed in flowers, seedlings, roots, leaves, and seeds. Present in stomata and meristematic cells.

The protein resides in the nucleus. Its subcellular location is the cytoplasm. It catalyses the reaction O-phospho-L-tyrosyl-[protein] + H2O = L-tyrosyl-[protein] + phosphate. The catalysed reaction is O-phospho-L-seryl-[protein] + H2O = L-seryl-[protein] + phosphate. It carries out the reaction O-phospho-L-threonyl-[protein] + H2O = L-threonyl-[protein] + phosphate. In terms of biological role, has a dual specificity toward Ser/Thr and Tyr-containing proteins. Prevents biotic and abiotic stress responses, including ozone, oxidative stress and pathogen attacks; represses MAPK activities during hypersensitive response to limit the spread of the HR response after infection by necrotrophic pathogen such as Botrytis cinerea. May be also involved in ABA and salt responses. Dephosphorylates MPK3 and MPK6. The chain is Dual specificity protein phosphatase 1B (DSPTP1B) from Arabidopsis thaliana (Mouse-ear cress).